The following is a 448-amino-acid chain: Protein chibby homolog 2 (448 aa).

8 positions are modified to phosphoserine: Ser41, Ser86, Ser89, Ser97, Ser124, Ser144, Ser148, and Ser150. A coiled-coil region spans residues 164–198; the sequence is KECMLQEENKSLREENKALREENRMLSKENKILQV. Ser212 and Ser225 each carry phosphoserine. Positions 242 to 267 form a coiled coil; sequence KEDSTLQLLREENRALQQLLEQKQAY. The disordered stretch occupies residues 270–323; that stretch reads QAEDTAAPAEESKPAPSPHEEPCSPGLLQDQGSGLSSRFEEPKGPPARQEDSKE. Basic and acidic residues-rich tracts occupy residues 279–291 and 307–323; these read EESK…HEEP and RFEE…DSKE. Phosphoserine is present on residues Ser335 and Ser338. A coiled-coil region spans residues 356-414; sequence LQLLREMRQALQALLKENRLLQEENRTLQVLRAEHRGFQEENKALWENNKLKLQQKLVI.

The protein belongs to the chibby family. SPERT subfamily. Homodimer. Binds to NEK1. Testis-specific.

The chain is Protein chibby homolog 2 from Homo sapiens (Human).